We begin with the raw amino-acid sequence, 739 residues long: Phosphoribosylformylglycinamidine synthase subunit PurL (739 aa).

Residue H53 is part of the active site. ATP-binding residues include Y56 and K95. E97 contacts Mg(2+). Substrate contacts are provided by residues 98-101 (SHNH) and R120. H99 serves as the catalytic Proton acceptor. Mg(2+) is bound at residue D121. Q244 contributes to the substrate binding site. D274 provides a ligand contact to Mg(2+). 318 to 320 (ESQ) serves as a coordination point for substrate. D501 and G538 together coordinate ATP. A Mg(2+)-binding site is contributed by N539. S541 lines the substrate pocket.

The protein belongs to the FGAMS family. Monomer. Part of the FGAM synthase complex composed of 1 PurL, 1 PurQ and 2 PurS subunits.

The protein localises to the cytoplasm. It carries out the reaction N(2)-formyl-N(1)-(5-phospho-beta-D-ribosyl)glycinamide + L-glutamine + ATP + H2O = 2-formamido-N(1)-(5-O-phospho-beta-D-ribosyl)acetamidine + L-glutamate + ADP + phosphate + H(+). The protein operates within purine metabolism; IMP biosynthesis via de novo pathway; 5-amino-1-(5-phospho-D-ribosyl)imidazole from N(2)-formyl-N(1)-(5-phospho-D-ribosyl)glycinamide: step 1/2. Functionally, part of the phosphoribosylformylglycinamidine synthase complex involved in the purines biosynthetic pathway. Catalyzes the ATP-dependent conversion of formylglycinamide ribonucleotide (FGAR) and glutamine to yield formylglycinamidine ribonucleotide (FGAM) and glutamate. The FGAM synthase complex is composed of three subunits. PurQ produces an ammonia molecule by converting glutamine to glutamate. PurL transfers the ammonia molecule to FGAR to form FGAM in an ATP-dependent manner. PurS interacts with PurQ and PurL and is thought to assist in the transfer of the ammonia molecule from PurQ to PurL. The sequence is that of Phosphoribosylformylglycinamidine synthase subunit PurL from Listeria innocua serovar 6a (strain ATCC BAA-680 / CLIP 11262).